A 112-amino-acid polypeptide reads, in one-letter code: uncharacterized protein (112 aa).

Helical transmembrane passes span 33–53 (IIGI…MIIF) and 69–89 (MNNI…HITV).

Its subcellular location is the membrane. This is an uncharacterized protein from Saccharomyces cerevisiae (strain ATCC 204508 / S288c) (Baker's yeast).